We begin with the raw amino-acid sequence, 262 residues long: MPAKLPDDTTLRLPRILCLHGGGTNARIFRAQCRVLSTLLSPHFRLCFAEAPFPSQPGPDVVSVYRHFGDFKSWIPMPPNPSISPTNVAKKILNSLRHTIEEDDRSGADGEWVAVLGFSQGARLAASLLFQEQNGGSGMVGVYGGVNFRFAVLLAGRGPMIPLDMDAMASVSSAVLSLPTIHVHGLQDPGLEHHRELLERYCNRETASLIEWEGNHRVPIKMKDARVVVEEILKIAQKTGCLVPPTIQGGGTSNCGALLLDR.

Active-site charge relay system residues include Ser-119, Asp-188, and His-216.

This sequence belongs to the LovG family.

It functions in the pathway secondary metabolite biosynthesis. Functionally, probable esterase; part of the gene cluster that mediates the biosynthesis of azaphilones, a class of fungal metabolites characterized by a highly oxygenated pyrano-quinone bicyclic core and exhibiting a broad range of bioactivities. In the first step, the non-reducing polyketide synthase azaA forms the hexaketide precursor from successive condensations of five malonyl-CoA units, presumably with a simple acetyl-CoA starter unit. The reactive polyketide chain then undergoes a PT-mediated C2-C7 cyclization to afford the aromatic ring and is eventually released as an aldehyde through the R-domain. The putative ketoreductase azaE is proposed to catalyze the reduction of the terminal ketone resulting in the early culture product FK17-P2a. The monooxygenase azaH was demonstrated to be the only enzyme required to convert FK17-P2a to azanigerone E. AzaH first hydroxylates the benzaldehyde intermediate FK17-P2a at C4, which triggers the formation of the pyran-ring to afford azanigerone E. In parallel, the 2,4-dimethylhexanoyl chain is synthesized by the HR-PKS azaB and is proposed to be transferred to the C4-hydroxyl of azanigerone E by the acyltransferase azaD directly from the ACP domain of azaB. Alternatively, the 2,4-dimethyl-hexanoyl chain may be offloaded from the HR-PKS as a carboxylic acid and converted to an acyl-CoA by azaF. The resulting acyl-CoA molecule could then be taken up as a substrate by AzaD to form azanigerone B. To yield the carboxylic acid substituent in azanigerone A, the hydroxypropyl side chain of azanigerone B would need to undergo a C-C oxidative cleavage catalyzed by cytochrome P450 AzaI. AzaI is proposed to act on a vicinal diol that leads to a C-C bond scission either through an alkoxyradical intermediate or a peroxy complex. In the biosynthesis of azanigerone A, azanigerone B first undergoes hydroxylation at C10, possibly catalyzed by one of the two FAD-dependent monooxygenases encoded in the cluster, azaG or azaL, resulting in the vicinal diol azanigerone C. Oxidative cleavage of azanigerone C by azaI would yield the corresponding aldehyde derivative of azanigerone A. Finally, the dehydrogenase azaJ is proposed to convert the aldehyde functional group into the carboxylic acid, completing the conversion from azanigerone B to azanigerone A. Alternatively, the oxidation of aldehyde to carboxylic acid may be catalyzed by the same P450 enzyme azaI via consecutive oxidation or by endogenous alcohol dehydrogenase. This Aspergillus niger (strain ATCC 1015 / CBS 113.46 / FGSC A1144 / LSHB Ac4 / NCTC 3858a / NRRL 328 / USDA 3528.7) protein is Probable esterase azaC.